A 393-amino-acid polypeptide reads, in one-letter code: 2,3,4,5-tetrahydropyridine-2,6-dicarboxylate N-succinyltransferase (393 aa).

Glutamate 261 acts as the Acyl-anhydride intermediate in catalysis. Residues arginine 263, glycine 278, serine 281, alanine 304, 319–320, glycine 327, lysine 356, and 369–372 contribute to the succinyl-CoA site; these read DA and RQDS.

This sequence belongs to the type 2 tetrahydrodipicolinate N-succinyltransferase family. In terms of assembly, homotrimer.

It is found in the cytoplasm. It carries out the reaction (S)-2,3,4,5-tetrahydrodipicolinate + succinyl-CoA + H2O = (S)-2-succinylamino-6-oxoheptanedioate + CoA. Its pathway is amino-acid biosynthesis; L-lysine biosynthesis via DAP pathway; LL-2,6-diaminopimelate from (S)-tetrahydrodipicolinate (succinylase route): step 1/3. Catalyzes the conversion of the cyclic tetrahydrodipicolinate (THDP) into the acyclic N-succinyl-L-2-amino-6-oxopimelate using succinyl-CoA. The protein is 2,3,4,5-tetrahydropyridine-2,6-dicarboxylate N-succinyltransferase of Nitratiruptor sp. (strain SB155-2).